A 117-amino-acid chain; its full sequence is MARMAMMILCVVLTCMVVATPYTEAAISCGQVTANLAGCLNYLRNGGAVPPACCNGVRSLNSAAKSTPDRKTACNCLKNASKSVSGIKAANAAGLPGKCGVNIPYQISPNTDCSKVQ.

Positions 1–25 are cleaved as a signal peptide; it reads MARMAMMILCVVLTCMVVATPYTEA. 4 disulfide bridges follow: Cys-29-Cys-76, Cys-39-Cys-53, Cys-54-Cys-99, and Cys-74-Cys-113.

Belongs to the plant LTP family.

Functionally, plant non-specific lipid-transfer proteins transfer phospholipids as well as galactolipids across membranes. May play a role in wax or cutin deposition in the cell walls of expanding epidermal cells and certain secretory tissues. This Lactuca sativa (Garden lettuce) protein is Non-specific lipid-transfer protein Lac s 1.